The following is a 432-amino-acid chain: Methylenetetrahydrofolate--tRNA-(uracil-5-)-methyltransferase TrmFO (432 aa).

Position 7-12 (Gly-7–Gly-12) interacts with FAD.

The protein belongs to the MnmG family. TrmFO subfamily. FAD serves as cofactor.

The protein localises to the cytoplasm. It carries out the reaction uridine(54) in tRNA + (6R)-5,10-methylene-5,6,7,8-tetrahydrofolate + NADH + H(+) = 5-methyluridine(54) in tRNA + (6S)-5,6,7,8-tetrahydrofolate + NAD(+). The catalysed reaction is uridine(54) in tRNA + (6R)-5,10-methylene-5,6,7,8-tetrahydrofolate + NADPH + H(+) = 5-methyluridine(54) in tRNA + (6S)-5,6,7,8-tetrahydrofolate + NADP(+). In terms of biological role, catalyzes the folate-dependent formation of 5-methyl-uridine at position 54 (M-5-U54) in all tRNAs. The protein is Methylenetetrahydrofolate--tRNA-(uracil-5-)-methyltransferase TrmFO of Anoxybacillus flavithermus (strain DSM 21510 / WK1).